The chain runs to 446 residues: Glycerol-3-phosphate acyltransferase 3 (446 aa).

The next 3 helical transmembrane spans lie at 11 to 31 (IFII…MFGS), 146 to 166 (LRVT…LLPL), and 168 to 188 (ITLA…VGQL). The short motif at 236–241 (HTSPID) is the HXXXXD motif element.

The protein belongs to the 1-acyl-sn-glycerol-3-phosphate acyltransferase family.

It is found in the endoplasmic reticulum membrane. It catalyses the reaction sn-glycerol 3-phosphate + an acyl-CoA = a 1-acyl-sn-glycero-3-phosphate + CoA. It carries out the reaction a 1-acyl-sn-glycero-3-phosphate + an acyl-CoA = a 1,2-diacyl-sn-glycero-3-phosphate + CoA. The catalysed reaction is dodecanoyl-CoA + sn-glycerol 3-phosphate = 1-dodecanoyl-sn-glycerol 3-phosphate + CoA. The enzyme catalyses sn-glycerol 3-phosphate + hexadecanoyl-CoA = 1-hexadecanoyl-sn-glycero-3-phosphate + CoA. It catalyses the reaction sn-glycerol 3-phosphate + (9Z)-octadecenoyl-CoA = 1-(9Z-octadecenoyl)-sn-glycero-3-phosphate + CoA. It carries out the reaction (9Z,12Z)-octadecadienoyl-CoA + sn-glycerol 3-phosphate = 1-(9Z,12Z)-octadecadienoyl-sn-glycero-3-phosphate + CoA. The catalysed reaction is 1-tetradecanoyl-sn-glycerol 3-phosphate + (9Z)-octadecenoyl-CoA = 1-tetradecanoyl-2-(9Z)-octadecenoyl-sn-glycero-3-phosphate + CoA. The enzyme catalyses 1-hexadecanoyl-sn-glycero-3-phosphate + (9Z)-octadecenoyl-CoA = 1-hexadecanoyl-2-(9Z-octadecenoyl)-sn-glycero-3-phosphate + CoA. It catalyses the reaction 1-(9Z-octadecenoyl)-sn-glycero-3-phosphate + (9Z)-octadecenoyl-CoA = 1,2-di-(9Z-octadecenoyl)-sn-glycero-3-phosphate + CoA. It carries out the reaction 1-(6Z,9Z,12Z-octadecatrienoyl)-sn-glycero-3-phosphate + (9Z)-octadecenoyl-CoA = (6Z,9Z,12Z)-octadecatrienoyl-2-(9Z)-octadecenoyl-sn-glycero-3-phosphate + CoA. The catalysed reaction is 1-(9Z,12Z,15Z)-octadecatrienoyl-sn-glycero-3-phosphate + (9Z)-octadecenoyl-CoA = 1-(9Z,12Z,15Z)-octadecatrienoyl-2-(9Z)-octadecenoyl-sn-glycero-3-phosphate + CoA. The enzyme catalyses 1-(9Z-octadecenoyl)-sn-glycero-3-phosphate + tetradecanoyl-CoA = 1-(9Z)-octadecenoyl-2-tetradecanoyl-sn-glycero-3-phosphate + CoA. It catalyses the reaction 1-(9Z-octadecenoyl)-sn-glycero-3-phosphate + hexadecanoyl-CoA = 1-(9Z)-octadecenoyl-2-hexadecanoyl-sn-glycero-3-phosphate + CoA. It carries out the reaction 1-(9Z-octadecenoyl)-sn-glycero-3-phosphate + octadecanoyl-CoA = 1-(9Z-octadecenoyl)-2-octadecanoyl-sn-glycero-3-phosphate + CoA. The catalysed reaction is 1-(9Z-octadecenoyl)-sn-glycero-3-phosphate + (9Z,12Z)-octadecadienoyl-CoA = 1-(9Z)-octadecenoyl-2-(9Z,12Z)-octadecadienoyl-sn-glycero-3-phosphate + CoA. The enzyme catalyses 1-(5Z,8Z,11Z,14Z-eicosatetraenoyl)-sn-glycero-3-phosphate + (9Z)-octadecenoyl-CoA = 1-(5Z,8Z,11Z,14Z)-eicosatetraenoyl-2-(9Z)-octadecenoyl-sn-glycero-3-phosphate + CoA. It functions in the pathway glycerolipid metabolism; triacylglycerol biosynthesis. The protein operates within phospholipid metabolism; CDP-diacylglycerol biosynthesis; CDP-diacylglycerol from sn-glycerol 3-phosphate: step 1/3. Its function is as follows. Converts glycerol-3-phosphate to 1-acyl-sn-glycerol-3-phosphate (lysophosphatidic acid or LPA) by incorporating an acyl moiety at the sn-1 position of the glycerol backbone. Also converts LPA into 1,2-diacyl-sn-glycerol-3-phosphate (phosphatidic acid or PA) by incorporating an acyl moiety at the sn-2 position of the glycerol backbone. Protects cells against lipotoxicity. The sequence is that of Glycerol-3-phosphate acyltransferase 3 from Xenopus laevis (African clawed frog).